A 67-amino-acid polypeptide reads, in one-letter code: Preprofallaxidin-1 (67 aa).

Residues 1-22 (MASLKKSLFLVLFLGMVSLSIC) form the signal peptide. Positions 23 to 46 (DKEKREGENEEEEEEHEEESEEKR) are excised as a propeptide. Residues 24-46 (KEKREGENEEEEEEHEEESEEKR) are disordered. Positions 30–42 (ENEEEEEEHEEES) are enriched in acidic residues.

As to expression, expressed by the skin glands.

Its subcellular location is the secreted. Its function is as follows. Fallaxidin-4.1 shows antibacterial activity against the Gram-positive bacteria L.lactis (MIC=12 uM), M.luteus (MIC=100 uM), S.epidermidis (MIC=100 uM) and S.uberis (MIC=50 uM). No antibacterial activity against the Gram-positive bacteria B.cereus, E.faecalis, L.innocua, S.aureus, or the Gram-negative bacteria E.cloacae and E.coli. Inhibits the formation of NO by neuronal nitric oxide synthase with an IC(50) of 13.3 uM. The chain is Preprofallaxidin-1 from Litoria fallax (Eastern dwarf tree frog).